We begin with the raw amino-acid sequence, 1822 residues long: Integrin beta-4 (1822 aa).

A signal peptide spans 1–27 (MAGPRPSPWARLLLAALISVSLSGTLA). At 28–710 (NRCKKAPVKS…HKKKDCPPGS (683 aa)) the chain is on the extracellular side. The PSI domain occupies 29–73 (RCKKAPVKSCTECVRVDKDCAYCTDEMFRDRRCNTQAELLAAGCQ). Cystine bridges form between Cys-30-Cys-48, Cys-38-Cys-455, Cys-41-Cys-61, Cys-51-Cys-72, Cys-245-Cys-288, Cys-457-Cys-476, Cys-468-Cys-479, and Cys-481-Cys-490. The VWFA domain occupies 131 to 329 (DLYILMDFSN…IPIFAVTNYS (199 aa)). Mg(2+) is bound by residues Ser-139 and Ser-141. 4 residues coordinate Ca(2+): Ser-141, Asp-144, Asp-145, and Asp-176. The tract at residues 194-199 (WPNSDP) is involved in NRG1- and IGF1-binding. Asn-228, Asp-230, Pro-232, and Glu-233 together coordinate Ca(2+). A Mg(2+)-binding site is contributed by Glu-233. Asn-327 carries an N-linked (GlcNAc...) asparagine glycan. Glu-350 is a Ca(2+) binding site. 4 consecutive I-EGF domains span residues 457–491 (CELQKEVRSARCSFNGDFVCGQCVCSEGWSGQTCN), 492–537 (CSTG…QFCE), 538–574 (YDNFQCPRTSGFLCNDRGRCSMGQCVCEPGWTGPSCD), and 575–615 (CPLS…TICE). Asn-491 carries N-linked (GlcNAc...) asparagine glycosylation. 11 disulfides stabilise this stretch: Cys-492/Cys-520, Cys-503/Cys-518, Cys-512/Cys-523, Cys-525/Cys-536, Cys-543/Cys-557, Cys-551/Cys-562, Cys-564/Cys-573, Cys-575/Cys-598, Cys-582/Cys-596, Cys-590/Cys-601, and Cys-603/Cys-614. The N-linked (GlcNAc...) asparagine glycan is linked to Asn-579. N-linked (GlcNAc...) asparagine glycosylation is present at Asn-617. 4 disulfides stabilise this stretch: Cys-626/Cys-671, Cys-632/Cys-651, Cys-635/Cys-648, and Cys-680/Cys-706. Residue Asn-695 is glycosylated (N-linked (GlcNAc...) asparagine). Residues 711–733 (FWWLIPLLLLLLPLLALLLLLCW) form a helical membrane-spanning segment. The palmitoylated on several cysteines stretch occupies residues 732 to 749 (CWKYCACCKACLALLPCC). Topologically, residues 734–1822 (KYCACCKACL…THMDQQFFQT (1089 aa)) are cytoplasmic. 3 positions are modified to phosphoserine: Ser-771, Ser-1069, and Ser-1119. One can recognise a Calx-beta domain in the interval 979–1084 (VNITIIKEQA…QVRRFHVQLS (106 aa)). The disordered stretch occupies residues 1113-1140 (TSQMLSSQPPPHGDLGAPQNPNAKAAGS). 2 Fibronectin type-III domains span residues 1129-1218 (APQN…THQE) and 1222-1321 (EPGR…TQPK). Positions 1400–1444 (LSASSGRSSDAEAPHGPPDDGGAGGKGGSLPRSATPGPPGEHLVN) are disordered. The span at 1418 to 1427 (DDGGAGGKGG) shows a compositional bias: gly residues. 3 positions are modified to phosphoserine: Ser-1454, Ser-1457, and Ser-1474. Thr-1487 bears the Phosphothreonine mark. Ser-1494 bears the Phosphoserine mark. The disordered stretch occupies residues 1495–1525 (LTRSEHSHSTTLPRDYSTLTSVSSHDSRLTA). Residues 1503–1518 (STTLPRDYSTLTSVSS) are compositionally biased toward polar residues. A Phosphothreonine modification is found at Thr-1530. Fibronectin type-III domains are found at residues 1530-1625 (TPTR…VHPQ) and 1643-1739 (APGP…SQDG). Position 1791 is a phosphoserine (Ser-1791).

The protein belongs to the integrin beta chain family. Heterodimer of an alpha and a beta subunit. Beta-4 associates with alpha-6. Interacts (via cytoplasmic region) with COL17A1 (via cytoplasmic region). Interacts (via cytoplasmic region) with DST isoform 3 (via N-terminus). Isoform beta-4a interacts (via cytoplasmic domain) with DST (via N-terminus). Interacts with RAC1. ITGA6:ITGB4 is found in a ternary complex with NRG1 and ERBB3. ITGA6:ITGB4 is found in a ternary complex with IGF1 and IGF1R. ITGA6:ITGB4 interacts with IGF2. Interacts with TMEM268; this interaction prevents ITGB4 degradation. Post-translationally, palmitoylated by DHHC3 at several cysteines of the membrane-proximal region, enhancing stability and cell surface expression. Palmitoylation also promotes secondary association with tertaspanins. Integrin alpha-6/beta-4 is predominantly expressed by epithelia. Isoform beta-4D is also expressed in colon and placenta. Isoform beta-4E is also expressed in epidermis, lung, duodenum, heart, spleen and stomach.

The protein localises to the cell membrane. Its subcellular location is the cell junction. The protein resides in the hemidesmosome. Integrin alpha-6/beta-4 is a receptor for laminin. Plays a critical structural role in the hemidesmosome of epithelial cells. Is required for the regulation of keratinocyte polarity and motility. ITGA6:ITGB4 binds to NRG1 (via EGF domain) and this binding is essential for NRG1-ERBB signaling. ITGA6:ITGB4 binds to IGF1 and this binding is essential for IGF1 signaling. ITGA6:ITGB4 binds to IGF2 and this binding is essential for IGF2 signaling. This Homo sapiens (Human) protein is Integrin beta-4 (ITGB4).